The chain runs to 1838 residues: Type III effector DspE (1838 aa).

Residues 1 to 12 (MELKSLGTEHKA) show a composition bias toward basic and acidic residues. Disordered regions lie at residues 1–72 (MELK…AAHQ), 86–163 (KKFS…PTQQ), 182–264 (MAHP…VATP), 281–300 (LEGT…LKGS), 398–418 (DGKS…KTML), and 1480–1505 (NLAA…SNNR). Residues 27–46 (ALQQGSSSSSPQNAAASLAA) show a composition bias toward low complexity. A compositionally biased stretch (polar residues) spans 91–103 (SAPQGQPGTTHSK). Over residues 110 to 120 (LLARDDGETQH) the composition is skewed to basic and acidic residues. Polar residues predominate over residues 407-418 (GSGTQSHNKTML). Over residues 1480–1502 (NLAAGSRERSTTSGQFGSTTSAS) the composition is skewed to low complexity.

It belongs to the AvrE family. In terms of assembly, interacts with the chaperone DspF (DspB/F).

The protein resides in the secreted. It is found in the host cell. With respect to regulation, polyamidoamine dendrimers inhibit channel and virulence activities. Functionally, major virulence factor that may function as a water- and solute-permeable channel dedicated to creating osmotic/water potential perturbation and a water- and nutrient-rich apoplast in which bacteria multiply within the infected plant tissues. Expression in Xenopus oocytes results in inward and outward currents, permeability to water and osmolarity-dependent oocyte swelling and bursting. Its function is as follows. Acts as a major cell-death inducer during fire blight, a necrotic disease affecting plants of the rosaceous family, and during hypersensitive response (HR) on non-host plants. Essential for pathogenicity on host plants. Contributes quantitatively and in a strain-dependent fashion to HR elicitation in non-host plants such as tobacco. Induces cell death in leaves of apple, a host plant, and tobacco, a non-host plant. Also triggers necrosis in the widely used model, non-host, N.benthamiana and in yeast. Required for the transient multiplication and survival of E.amylovora in non-host A.thaliana leaves. In A.thaliana, triggers electrolyte leakage, activation of defense pathways, reactive oxygen species (ROS) accumulation and cell death. The toxicity of DspE in A.thaliana is associated with an early repression of de novo protein synthesis. This chain is Type III effector DspE, found in Erwinia amylovora (Fire blight bacteria).